The following is a 243-amino-acid chain: UPF0246 protein M28_Spy1772 (243 aa).

It belongs to the UPF0246 family.

The chain is UPF0246 protein M28_Spy1772 from Streptococcus pyogenes serotype M28 (strain MGAS6180).